Here is a 104-residue protein sequence, read N- to C-terminus: Protein KleF (104 aa).

The protein is Protein KleF (kleF) of Escherichia coli.